The following is a 271-amino-acid chain: Ribonuclease HII (271 aa).

Residues 84-271 (VLIAGVDEVG…HRMSFLSNYI (188 aa)) enclose the RNase H type-2 domain. Residues aspartate 90, glutamate 91, and aspartate 187 each contribute to the a divalent metal cation site.

It belongs to the RNase HII family. Mn(2+) serves as cofactor. The cofactor is Mg(2+).

The protein localises to the cytoplasm. The catalysed reaction is Endonucleolytic cleavage to 5'-phosphomonoester.. In terms of biological role, endonuclease that specifically degrades the RNA of RNA-DNA hybrids. The polypeptide is Ribonuclease HII (Clostridium tetani (strain Massachusetts / E88)).